A 134-amino-acid chain; its full sequence is Profilin-2 (134 aa).

C13 and C118 form a disulfide bridge. The short motif at 84 to 100 (AVIRGKKGSGGITIKET) is the Involved in PIP2 interaction element. T114 carries the post-translational modification Phosphothreonine.

It belongs to the profilin family. Occurs in many kinds of cells as a complex with monomeric actin in a 1:1 ratio. Post-translationally, phosphorylated by MAP kinases.

It is found in the cytoplasm. Its subcellular location is the cytoskeleton. Functionally, binds to actin and affects the structure of the cytoskeleton. At high concentrations, profilin prevents the polymerization of actin, whereas it enhances it at low concentrations. The protein is Profilin-2 of Olea europaea (Common olive).